The following is a 144-amino-acid chain: Grifin (144 aa).

One can recognise a Galectin domain in the interval 5-133; sequence FEAFCAGGLA…DHQLAQVELA (129 aa). Phosphoserine is present on Ser-138.

Homodimer. As to expression, lens-specific. Located at the interface between lens fiber cells (at protein level).

The protein is Grifin (Grifin) of Rattus norvegicus (Rat).